Reading from the N-terminus, the 314-residue chain is Ribosomal RNA small subunit methyltransferase H (314 aa).

Residues glycine 32–histidine 34, aspartate 52, phenylalanine 79, aspartate 100, and glutamine 107 contribute to the S-adenosyl-L-methionine site.

It belongs to the methyltransferase superfamily. RsmH family.

The protein localises to the cytoplasm. The enzyme catalyses cytidine(1402) in 16S rRNA + S-adenosyl-L-methionine = N(4)-methylcytidine(1402) in 16S rRNA + S-adenosyl-L-homocysteine + H(+). Specifically methylates the N4 position of cytidine in position 1402 (C1402) of 16S rRNA. The chain is Ribosomal RNA small subunit methyltransferase H from Shouchella clausii (strain KSM-K16) (Alkalihalobacillus clausii).